A 464-amino-acid polypeptide reads, in one-letter code: Histidine--tRNA ligase (464 aa).

The protein belongs to the class-II aminoacyl-tRNA synthetase family. Homodimer.

It localises to the cytoplasm. The enzyme catalyses tRNA(His) + L-histidine + ATP = L-histidyl-tRNA(His) + AMP + diphosphate + H(+). The protein is Histidine--tRNA ligase of Stenotrophomonas maltophilia (strain K279a).